A 241-amino-acid polypeptide reads, in one-letter code: DNA repair protein RecO (241 aa).

It belongs to the RecO family.

In terms of biological role, involved in DNA repair and RecF pathway recombination. The protein is DNA repair protein RecO of Rickettsia bellii (strain OSU 85-389).